A 351-amino-acid chain; its full sequence is C(7)-cyclitol 7-kinase (351 aa).

The protein belongs to the ROK (NagC/XylR) family.

The enzyme catalyses valienone + ATP = valienone 7-phosphate + ADP + H(+). It carries out the reaction validone + ATP = validone 7-phosphate + ADP + H(+). Its function is as follows. Involved in the biosynthesis of the antifungal agent validamycin A. Catalyzes the phosphorylation of valienone and validone to their 7-phosphate derivatives. In Streptomyces hygroscopicus subsp. limoneus, this protein is C(7)-cyclitol 7-kinase.